A 579-amino-acid chain; its full sequence is Vitamin B6 transporter TPN1 (579 aa).

A run of 12 helical transmembrane segments spans residues 99–119 (TGGLSSMSSFLLGPLLFGLSF), 123–143 (LASSLISVTIGCLIAAYCSIM), 158–178 (LFGWWFVKLVALASIIGVMGW), 199–219 (PLWVGIVIVTVCSFLVAIFGI), 222–242 (VIKVETYLSVPVLTAFLLLYI), 275–295 (LCYSITATWGSITADYYILFP), 303–323 (IFCLTFFGTFLPTCFVGILGL), 363–383 (VVVLVFSLVSNNIINTYSAAF), 395–415 (IPRWFWSIVCTIICLVCALIG), 422–442 (ILGNFLPMIGYWISMYFILLF), 520–540 (FAFIVGVAGVVVGMAQAYWIG), and 546–566 (FGEYGGDVAMWLSMAFSGVVY).

This sequence belongs to the purine-cytosine permease (2.A.39) family.

The protein localises to the membrane. In terms of biological role, thiamine-regulated, high affinity import carrier of pyridoxine, pyridoxal and pyridoxamine. This chain is Vitamin B6 transporter TPN1 (TPN1), found in Saccharomyces cerevisiae (Baker's yeast).